We begin with the raw amino-acid sequence, 28 residues long: Putative GDSL-motif lipase/hydrolase-like protein (28 aa).

It belongs to the 'GDSL' lipolytic enzyme family.

This is Putative GDSL-motif lipase/hydrolase-like protein from Populus euphratica (Euphrates poplar).